Consider the following 1199-residue polypeptide: Putative mitoferrin (1199 aa).

A helical transmembrane segment spans residues 32–52 (VPLWQHIFCGSIAGLMEHVFM). 13 N-linked (GlcNAc...) asparagine glycosylation sites follow: N92, N171, N208, N268, N326, N353, N443, N499, N539, N649, N708, N715, and N723. A helical transmembrane segment spans residues 730–750 (GVNVVVLGCIPAHALYFSTFE). N763 and N772 each carry an N-linked (GlcNAc...) asparagine glycan. Residues 792 to 873 (LNYFSIAVSG…ICTNEKMKKI (82 aa)) form a Solcar 1 repeat. 2 consecutive transmembrane segments (helical) span residues 795-815 (FSIA…ITPI) and 845-865 (LYLS…IMIC). N914, N922, N965, N1013, N1022, N1041, and N1056 each carry an N-linked (GlcNAc...) asparagine glycan. One copy of the Solcar 2 repeat lies at 1109–1191 (SYFVCAGIGG…WGTYETMKRF (83 aa)). The chain crosses the membrane as a helical span at residues 1111-1131 (FVCAGIGGGIAAVLTNPLDVI).

Belongs to the mitochondrial carrier (TC 2.A.29) family.

Its subcellular location is the mitochondrion membrane. Its function is as follows. Putative iron transporter. This chain is Putative mitoferrin, found in Plasmodium falciparum (isolate 3D7).